Reading from the N-terminus, the 820-residue chain is Disintegrin and metalloproteinase domain-containing protein 29 (820 aa).

The signal sequence occupies residues 1–18 (MKMLLLLHCLGVFLSCSG). Residues 19 to 193 (HIQDEHPQYH…TQKQSSYVGW (175 aa)) constitute a propeptide that is removed on maturation. The Extracellular portion of the chain corresponds to 194 to 674 (WIHFRIVEIV…GPPPKRKKKK (481 aa)). In terms of domain architecture, Peptidase M12B spans 198-390 (RIVEIVVVID…RTKCLLETVH (193 aa)). 2 N-linked (GlcNAc...) asparagine glycosylation sites follow: Asn-217 and Asn-320. Disulfide bonds link Cys-307-Cys-384, Cys-347-Cys-369, and Cys-349-Cys-354. N-linked (GlcNAc...) asparagine glycans are attached at residues Asn-368, Asn-428, Asn-469, Asn-538, Asn-545, Asn-558, and Asn-564. One can recognise a Disintegrin domain in the interval 397–483 (VKRCGNGVVE…KCPDDFYVED (87 aa)). A disulfide bridge links Cys-455 with Cys-475. 3 disulfide bridges follow: Cys-625–Cys-636, Cys-630–Cys-642, and Cys-644–Cys-653. Residues 625–654 (CSPAFCNKRGICNNKHHCHCNYLWDPPNCL) form the EGF-like domain. The chain crosses the membrane as a helical span at residues 675-695 (KFCYLCILLLIVLFILLCCLY). The Cytoplasmic portion of the chain corresponds to 696 to 820 (RLCKKSKPIK…SQSQPPVTPS (125 aa)). Residues 706–820 (KQQDVQTPSA…SQSQPPVTPS (115 aa)) form a disordered region. The span at 715–727 (AKEEEKIQRRPHE) shows a compositional bias: basic and acidic residues. Positions 738–820 (PSQSQPPVTP…SQSQPPVTPS (83 aa)) are enriched in low complexity. 9 consecutive repeat copies span residues 739-747 (SQSQPPVTP), 748-756 (SQSHPQVMP), 757-765 (SQSQPPVTP), 766-774 (SQSQPRVMP), 775-783 (SQSQPPVMP), 784-792 (SQSHPQLTP), 793-801 (SQSQPPVTP), 802-810 (SQRQPQLMP), and 811-819 (SQSQPPVTP). The tract at residues 739-819 (SQSQPPVTPS…PSQSQPPVTP (81 aa)) is 9 X 9 AA approximate repeats.

Expressed specifically in testes.

The protein localises to the membrane. Functionally, may be involved in spermatogenesis and fertilization. Seems to be a non catalytic metalloprotease-like protein. This is Disintegrin and metalloproteinase domain-containing protein 29 (ADAM29) from Homo sapiens (Human).